A 591-amino-acid polypeptide reads, in one-letter code: Aspartate--tRNA(Asp/Asn) ligase (591 aa).

Residue Glu-176 coordinates L-aspartate. Residues 200–203 (QLFK) form an aspartate region. Arg-222 is an L-aspartate binding site. Residues 222-224 (RDE) and Gln-231 contribute to the ATP site. Residue His-450 participates in L-aspartate binding. Residue Glu-484 participates in ATP binding. Arg-491 is an L-aspartate binding site. 536-539 (GLDR) contacts ATP.

The protein belongs to the class-II aminoacyl-tRNA synthetase family. Type 1 subfamily. Homodimer.

The protein resides in the cytoplasm. The catalysed reaction is tRNA(Asx) + L-aspartate + ATP = L-aspartyl-tRNA(Asx) + AMP + diphosphate. Its function is as follows. Aspartyl-tRNA synthetase with relaxed tRNA specificity since it is able to aspartylate not only its cognate tRNA(Asp) but also tRNA(Asn). Reaction proceeds in two steps: L-aspartate is first activated by ATP to form Asp-AMP and then transferred to the acceptor end of tRNA(Asp/Asn). In Bacillus cereus (strain ATCC 14579 / DSM 31 / CCUG 7414 / JCM 2152 / NBRC 15305 / NCIMB 9373 / NCTC 2599 / NRRL B-3711), this protein is Aspartate--tRNA(Asp/Asn) ligase.